We begin with the raw amino-acid sequence, 298 residues long: UDP-3-O-acyl-N-acetylglucosamine deacetylase (298 aa).

Zn(2+) contacts are provided by H79, H239, and D243. H266 acts as the Proton donor in catalysis.

This sequence belongs to the LpxC family. Zn(2+) is required as a cofactor.

The enzyme catalyses a UDP-3-O-[(3R)-3-hydroxyacyl]-N-acetyl-alpha-D-glucosamine + H2O = a UDP-3-O-[(3R)-3-hydroxyacyl]-alpha-D-glucosamine + acetate. Its pathway is glycolipid biosynthesis; lipid IV(A) biosynthesis; lipid IV(A) from (3R)-3-hydroxytetradecanoyl-[acyl-carrier-protein] and UDP-N-acetyl-alpha-D-glucosamine: step 2/6. Catalyzes the hydrolysis of UDP-3-O-myristoyl-N-acetylglucosamine to form UDP-3-O-myristoylglucosamine and acetate, the committed step in lipid A biosynthesis. This is UDP-3-O-acyl-N-acetylglucosamine deacetylase from Wigglesworthia glossinidia brevipalpis.